An 82-amino-acid polypeptide reads, in one-letter code: Small ribosomal subunit protein uS17 (82 aa).

The protein belongs to the universal ribosomal protein uS17 family. As to quaternary structure, part of the 30S ribosomal subunit.

One of the primary rRNA binding proteins, it binds specifically to the 5'-end of 16S ribosomal RNA. This is Small ribosomal subunit protein uS17 from Aeromonas salmonicida (strain A449).